A 502-amino-acid chain; its full sequence is Cytochrome P450 71B16 (502 aa).

A helical membrane pass occupies residues 1–21; sequence MAISLLCLFLITLVSLIFVVK. Residue C444 participates in heme binding.

It belongs to the cytochrome P450 family. Requires heme as cofactor.

It localises to the membrane. This chain is Cytochrome P450 71B16 (CYP71B16), found in Arabidopsis thaliana (Mouse-ear cress).